Here is a 452-residue protein sequence, read N- to C-terminus: 1-aminocyclopropane-1-carboxylate synthase 3 (452 aa).

Lysine 283 carries the post-translational modification N6-(pyridoxal phosphate)lysine.

Belongs to the class-I pyridoxal-phosphate-dependent aminotransferase family. It depends on pyridoxal 5'-phosphate as a cofactor. In terms of tissue distribution, expressed in leaves. Expressed in roots and leaf blades. Expressed at low levels in leaf sheaths and shoot bases.

The enzyme catalyses S-adenosyl-L-methionine = 1-aminocyclopropane-1-carboxylate + S-methyl-5'-thioadenosine + H(+). It participates in alkene biosynthesis; ethylene biosynthesis via S-adenosyl-L-methionine; ethylene from S-adenosyl-L-methionine: step 1/2. Functionally, catalyzes the formation of 1-aminocyclopropane-1-carboxylate, a direct precursor of ethylene in higher plants. The polypeptide is 1-aminocyclopropane-1-carboxylate synthase 3 (Oryza sativa subsp. japonica (Rice)).